Reading from the N-terminus, the 174-residue chain is Vimentin-type intermediate filament-associated coiled-coil protein (174 aa).

Residues 7-97 (LQIREANAHL…DQRDQMIQQL (91 aa)) are a coiled coil. The segment at 128-174 (GPLPASHSHRAQLLPDGPGPPLGNNMGKEEGQDDQDDQQPAVFGTTV) is disordered.

It localises to the cytoplasm. This is Vimentin-type intermediate filament-associated coiled-coil protein (Vmac) from Mus musculus (Mouse).